We begin with the raw amino-acid sequence, 51 residues long: Ribosome biogenesis protein Nop10 (51 aa).

This sequence belongs to the NOP10 family.

In terms of biological role, involved in ribosome biogenesis; more specifically in 18S rRNA pseudouridylation and in cleavage of pre-rRNA. The sequence is that of Ribosome biogenesis protein Nop10 from Nitrosopumilus maritimus (strain SCM1).